The sequence spans 478 residues: Zinc metalloproteinase/disintegrin (478 aa).

A signal peptide spans 1-20; the sequence is MIQVLLVTICLAAFPYQGSS. Positions 21 to 187 are excised as a propeptide; it reads IILESGNVND…PIKKASDLNL (167 aa). Residues 193–389 form the Peptidase M12B domain; that stretch reads RYVELFIVVD…QKPQCILKKP (197 aa). Cystine bridges form between Cys-304–Cys-384, Cys-344–Cys-368, and Cys-346–Cys-351. His-329 is a binding site for Zn(2+). Residue Glu-330 is part of the active site. The Zn(2+) site is built by His-333 and His-339. Positions 390 to 407 are excised as a propeptide; that stretch reads LRTDTVSTPVSGNELLEA. In terms of domain architecture, Disintegrin spans 397 to 478; that stretch reads TPVSGNELLE…ADCPRNGLYG (82 aa). Cystine bridges form between Cys-411–Cys-426, Cys-413–Cys-421, Cys-420–Cys-443, Cys-434–Cys-440, Cys-439–Cys-464, and Cys-452–Cys-471. A Cell attachment site; atypical (MVD) motif is present at residues 456-458; the sequence is MVD.

The protein belongs to the venom metalloproteinase (M12B) family. P-II subfamily. P-IIa sub-subfamily. Monomer (disintegrin). It depends on Zn(2+) as a cofactor. Expressed by the venom gland.

Its subcellular location is the secreted. It catalyses the reaction Cleavage of 3-Asn-|-Gln-4, 9-Ser-|-His-10 and 14-Ala-|-Leu-15 bonds in insulin B chain and 14-Tyr-|-Gln-15 and 8-Thr-|-Ser-9 in A chain. Cleaves type IV collagen at 73-Ala-|-Gln-74 in alpha1-(IV) and at 7-Gly-|-Leu-8 in alpha2-(IV).. Its function is as follows. Snake venom zinc metalloproteinase that causes hemorrhage by provoking the degradation of the sub-endothelial matrix proteins (fibronectin, laminin, type IV collagen, nidogen, and gelatins). Functionally, potent inhibitor of both collagen- (IC(50)=4 nM) and ADP-induced (IC(50)=8 nM) platelet aggregation. May act by binding to the platelet receptor GPIIb/GPIIIa (ITGA2B/ITGB3). The polypeptide is Zinc metalloproteinase/disintegrin (Crotalus atrox (Western diamondback rattlesnake)).